Consider the following 73-residue polypeptide: Putative membrane protein insertion efficiency factor (73 aa).

It belongs to the UPF0161 family.

The protein resides in the cell inner membrane. Could be involved in insertion of integral membrane proteins into the membrane. In Dinoroseobacter shibae (strain DSM 16493 / NCIMB 14021 / DFL 12), this protein is Putative membrane protein insertion efficiency factor.